The primary structure comprises 408 residues: GTPase HflX (408 aa).

A Hflx-type G domain is found at 198–361; sequence PRVSLVGYTN…LIVREMERHY (164 aa). GTP-binding positions include 204 to 211, 229 to 233, 251 to 254, 317 to 320, and 339 to 341; these read GYTNAGKS, FVTLD, DTVG, NKAD, and SAK. Mg(2+)-binding residues include serine 211 and threonine 231.

The protein belongs to the TRAFAC class OBG-HflX-like GTPase superfamily. HflX GTPase family. In terms of assembly, monomer. Associates with the 50S ribosomal subunit. Mg(2+) serves as cofactor.

The protein localises to the cytoplasm. Its function is as follows. GTPase that associates with the 50S ribosomal subunit and may have a role during protein synthesis or ribosome biogenesis. The sequence is that of GTPase HflX from Spirochaeta thermophila (strain ATCC 49972 / DSM 6192 / RI 19.B1).